Reading from the N-terminus, the 493-residue chain is Transmembrane protein 145 (493 aa).

Residues 9–29 traverse the membrane as a helical segment; the sequence is LRRLLPPLLLLLLSLPPRARA. N-linked (GlcNAc...) asparagine glycosylation occurs at N35. Helical transmembrane passes span 175–195, 207–227, 241–261, 282–302, 318–338, 349–369, and 381–401; these read VTFL…GYLL, MFMA…IYWG, ILAK…LILL, VYMT…AEFF, GLIG…LVSL, VPFF…ALIA, and IVNG…LIMT. N444 is a glycosylation site (N-linked (GlcNAc...) asparagine). Residues 464 to 493 form a disordered region; the sequence is PATSPLPRAAPDSGLPLFRDLRPPGPLRDL.

Its subcellular location is the membrane. In Homo sapiens (Human), this protein is Transmembrane protein 145 (TMEM145).